A 196-amino-acid chain; its full sequence is ATP-dependent Clp protease proteolytic subunit (196 aa).

Ser-98 serves as the catalytic Nucleophile. Residue His-123 is part of the active site.

The protein belongs to the peptidase S14 family. Fourteen ClpP subunits assemble into 2 heptameric rings which stack back to back to give a disk-like structure with a central cavity, resembling the structure of eukaryotic proteasomes.

Its subcellular location is the cytoplasm. It catalyses the reaction Hydrolysis of proteins to small peptides in the presence of ATP and magnesium. alpha-casein is the usual test substrate. In the absence of ATP, only oligopeptides shorter than five residues are hydrolyzed (such as succinyl-Leu-Tyr-|-NHMec, and Leu-Tyr-Leu-|-Tyr-Trp, in which cleavage of the -Tyr-|-Leu- and -Tyr-|-Trp bonds also occurs).. Cleaves peptides in various proteins in a process that requires ATP hydrolysis. Has a chymotrypsin-like activity. Plays a major role in the degradation of misfolded proteins. This Lactiplantibacillus plantarum (strain ATCC BAA-793 / NCIMB 8826 / WCFS1) (Lactobacillus plantarum) protein is ATP-dependent Clp protease proteolytic subunit.